A 72-amino-acid polypeptide reads, in one-letter code: Translation initiation factor IF-1 2 (72 aa).

Positions 1–72 constitute an S1-like domain; the sequence is MAKDDVIQMQ…SRARIVFRTK (72 aa).

It belongs to the IF-1 family. In terms of assembly, component of the 30S ribosomal translation pre-initiation complex which assembles on the 30S ribosome in the order IF-2 and IF-3, IF-1 and N-formylmethionyl-tRNA(fMet); mRNA recruitment can occur at any time during PIC assembly.

It localises to the cytoplasm. Functionally, one of the essential components for the initiation of protein synthesis. Stabilizes the binding of IF-2 and IF-3 on the 30S subunit to which N-formylmethionyl-tRNA(fMet) subsequently binds. Helps modulate mRNA selection, yielding the 30S pre-initiation complex (PIC). Upon addition of the 50S ribosomal subunit IF-1, IF-2 and IF-3 are released leaving the mature 70S translation initiation complex. This is Translation initiation factor IF-1 2 from Cupriavidus metallidurans (strain ATCC 43123 / DSM 2839 / NBRC 102507 / CH34) (Ralstonia metallidurans).